The following is a 304-amino-acid chain: Galactofuranosyltransferase GlfT1 (304 aa).

It belongs to the glycosyltransferase 2 family. In terms of assembly, is probably part of an AG biosynthetic complex.

It is found in the cell membrane. The protein localises to the secreted. The protein resides in the cell wall. It catalyses the reaction alpha-L-rhamnosyl-(1-&gt;3)-N-acetyl-alpha-D-glucosaminyl-diphospho-trans,octa-cis-decaprenol + 2 UDP-alpha-D-galactofuranose = beta-D-galactofuranosyl-(1-&gt;5)-beta-D-galactofuranosyl-(1-&gt;4)-alpha-L-rhamnosyl-(1-&gt;3)-N-acetyl-alpha-D-glucosaminyl-diphospho-trans,octa-cis-decaprenol + 2 UDP + 2 H(+). The protein operates within cell wall biogenesis; cell wall polysaccharide biosynthesis. Its function is as follows. Involved in the biosynthesis of the arabinogalactan (AG) region of the mycolylarabinogalactan-peptidoglycan (mAGP) complex, an essential component of the mycobacterial cell wall. Catalyzes the transfer of the first two galactofuranosyl (Galf) units from UDP-galactofuranose (UDP-Galf) onto the rhamnosyl-GlcNAc-diphospho-decaprenol (Rha-GlcNAc-PP-C50) acceptor, yielding galactofuranosyl-galactofuranosyl-rhamnosyl-GlcNAc-diphospho-decaprenol (Galf-Galf-Rha-GlcNAc-PP-C50). Thus, GlfT1 is the initiator of galactan synthesis, while GlfT2 continues with the subsequent polymerization events. This is Galactofuranosyltransferase GlfT1 from Mycobacterium tuberculosis (strain CDC 1551 / Oshkosh).